We begin with the raw amino-acid sequence, 194 residues long: Protein GrpE (194 aa).

The tract at residues 1–44 is disordered; the sequence is MAEEKQNEELNEQEELNETEAETAEAEQTAAEADAPAEETQTEM. The span at 9-25 shows a compositional bias: acidic residues; sequence ELNEQEELNETEAETAE.

It belongs to the GrpE family. In terms of assembly, homodimer.

It is found in the cytoplasm. Participates actively in the response to hyperosmotic and heat shock by preventing the aggregation of stress-denatured proteins, in association with DnaK and GrpE. It is the nucleotide exchange factor for DnaK and may function as a thermosensor. Unfolded proteins bind initially to DnaJ; upon interaction with the DnaJ-bound protein, DnaK hydrolyzes its bound ATP, resulting in the formation of a stable complex. GrpE releases ADP from DnaK; ATP binding to DnaK triggers the release of the substrate protein, thus completing the reaction cycle. Several rounds of ATP-dependent interactions between DnaJ, DnaK and GrpE are required for fully efficient folding. The polypeptide is Protein GrpE (Bacillus licheniformis (strain ATCC 14580 / DSM 13 / JCM 2505 / CCUG 7422 / NBRC 12200 / NCIMB 9375 / NCTC 10341 / NRRL NRS-1264 / Gibson 46)).